The chain runs to 356 residues: Phospho-N-acetylmuramoyl-pentapeptide-transferase (356 aa).

10 helical membrane-spanning segments follow: residues 25–45 (TIAAMLTSGLIVFLFGPSIIA), 70–90 (GTPTMGGLMILTGIVVSAFLW), 93–113 (LSNIYFWVSLLVMLSFGAIGF), 138–158 (FFVAAIAAFIILQIGSSGFAL), 164–184 (YLIHLGWFFIPFSAFVIVATG), 195–215 (GLAIVPVMVAALSFALIAYLC), 235–255 (LAVLLGAVVGAGLGFLWFNAP), 258–278 (AIFMGDTGSLALGGLLGTVAV), 284–304 (IVLVLIGGLFVVEAFSVVIQV), and 333–353 (QVVIRFWIISIVLALIGLSTL).

Belongs to the glycosyltransferase 4 family. MraY subfamily. The cofactor is Mg(2+).

It is found in the cell inner membrane. It catalyses the reaction UDP-N-acetyl-alpha-D-muramoyl-L-alanyl-gamma-D-glutamyl-meso-2,6-diaminopimeloyl-D-alanyl-D-alanine + di-trans,octa-cis-undecaprenyl phosphate = di-trans,octa-cis-undecaprenyl diphospho-N-acetyl-alpha-D-muramoyl-L-alanyl-D-glutamyl-meso-2,6-diaminopimeloyl-D-alanyl-D-alanine + UMP. The protein operates within cell wall biogenesis; peptidoglycan biosynthesis. Catalyzes the initial step of the lipid cycle reactions in the biosynthesis of the cell wall peptidoglycan: transfers peptidoglycan precursor phospho-MurNAc-pentapeptide from UDP-MurNAc-pentapeptide onto the lipid carrier undecaprenyl phosphate, yielding undecaprenyl-pyrophosphoryl-MurNAc-pentapeptide, known as lipid I. The polypeptide is Phospho-N-acetylmuramoyl-pentapeptide-transferase (Bartonella tribocorum (strain CIP 105476 / IBS 506)).